Here is a 438-residue protein sequence, read N- to C-terminus: Serine carboxypeptidase-like 5 (438 aa).

Positions 1-28 (MANYISSVLKSLLLLLHLVFLIQQHVDS) are cleaved as a signal peptide. Cystine bridges form between Cys-87-Cys-328, Cys-251-Cys-263, and Cys-287-Cys-294. N-linked (GlcNAc...) asparagine glycosylation is present at Asn-108. Residue Ser-183 is part of the active site. N-linked (GlcNAc...) asparagine glycosylation is present at Asn-347. The active site involves Asp-363. Residue Asn-379 is glycosylated (N-linked (GlcNAc...) asparagine). His-416 is an active-site residue.

The protein belongs to the peptidase S10 family. As to expression, expressed in seedlings, roots, and siliques.

It is found in the secreted. Its function is as follows. Probable carboxypeptidase. The polypeptide is Serine carboxypeptidase-like 5 (SCPL5) (Arabidopsis thaliana (Mouse-ear cress)).